We begin with the raw amino-acid sequence, 142 residues long: Clock-controlled protein 6 (142 aa).

This sequence belongs to the SED1 family.

The protein is Clock-controlled protein 6 (ccg-6) of Neurospora crassa (strain ATCC 24698 / 74-OR23-1A / CBS 708.71 / DSM 1257 / FGSC 987).